The chain runs to 681 residues: MIDRYKHQQLRIGSVSPQQISAWATKILPNGEIVGEVTKPYTFHYKTNKPEKDGLFCERIFGPIKSGICACGNYRVIGDEKEDPKFCEQCGVEFVDSRIRRYQMGYIKLACPVTHVWYLKRLPSYIANLLDKPLKELEGLVYCDFSFARPITKKPTFLRLRGLFEYEIQSWKYSIPLFFTTQGFDTFRNREISTGAGAIREQLADLDLRIIIENSLVEWEELGEEGHTGNEWEDRKVGRRKDFLVRRVELAKHFIRTNIEPEWMVLCLLPVLPPELRPIIQIDGGKLMSSDINELYRRVIYRNNTLTDLLTTSRSTPGELVMCQEKLVQEAVDTLLDNGIRGQPMRDGHNKVYKSFSDVIEGKEGRFRETLLGKRVDYSGRSVIVVGPSLSLHRCGLPREIAIELFQTFVIRGLIRQHLASNIGVAKSKIREKEPIVWEILQEVMQGHPVLLNRAPTLHRLGIQAFQPVLVEGRAICLHPLVCKGFNADFDGDQMAVHVPLSLEAQVEARLLMFSHMNLLSPAIGDPISVPTQDMLIGLYVLTSGNHRGICVNRYNPCNRRNYQNQKRSDNSYYKYTKEPFFSNSYDAIGAYRQKRINLDSPLWLRWRLDQRVIASRETPIEVHYESLGTFYEIYGHYLIVRSLKKKILFIYIRTTVGHIALYREIEEAIQGFSRAYSYAT.

The Zn(2+) site is built by Cys-69, Cys-71, Cys-87, and Cys-90. Asp-489, Asp-491, and Asp-493 together coordinate Mg(2+).

Belongs to the RNA polymerase beta' chain family. RpoC1 subfamily. In terms of assembly, in plastids the minimal PEP RNA polymerase catalytic core is composed of four subunits: alpha, beta, beta', and beta''. When a (nuclear-encoded) sigma factor is associated with the core the holoenzyme is formed, which can initiate transcription. Mg(2+) is required as a cofactor. Requires Zn(2+) as cofactor.

It is found in the plastid. Its subcellular location is the chloroplast. It catalyses the reaction RNA(n) + a ribonucleoside 5'-triphosphate = RNA(n+1) + diphosphate. DNA-dependent RNA polymerase catalyzes the transcription of DNA into RNA using the four ribonucleoside triphosphates as substrates. The protein is DNA-directed RNA polymerase subunit beta' of Solanum bulbocastanum (Wild potato).